We begin with the raw amino-acid sequence, 155 residues long: Ribosomal RNA large subunit methyltransferase H (155 aa).

Residues Leu-72, Gly-103, and Leu-122–Met-127 each bind S-adenosyl-L-methionine.

Belongs to the RNA methyltransferase RlmH family. As to quaternary structure, homodimer.

It localises to the cytoplasm. It carries out the reaction pseudouridine(1915) in 23S rRNA + S-adenosyl-L-methionine = N(3)-methylpseudouridine(1915) in 23S rRNA + S-adenosyl-L-homocysteine + H(+). In terms of biological role, specifically methylates the pseudouridine at position 1915 (m3Psi1915) in 23S rRNA. This Methylobacillus flagellatus (strain ATCC 51484 / DSM 6875 / VKM B-1610 / KT) protein is Ribosomal RNA large subunit methyltransferase H.